The chain runs to 507 residues: Cyclic GMP-AMP synthase (507 aa).

Residues 1 to 146 form a DNA-binding region; that stretch reads MEDPRRRTTA…PRAPRGSRKE (146 aa). The tract at residues 1-151 is disordered; sequence MEDPRRRTTA…GSRKEPDKLK (151 aa). Over residues 7 to 18 the composition is skewed to basic residues; it reads RTTAPRAKKPSA. The segment covering 44–57 has biased composition (basic and acidic residues); the sequence is RRAERDGDTTEKPR. A required for association with the cell membrane region spans residues 48-59; the sequence is RDGDTTEKPRAP. Threonine 52 bears the Phosphothreonine mark. Residues 119–132 form a required for activation upon DNA viral infection region; sequence RKVVRGPSHRRGAR. Over residues 121-131 the composition is skewed to basic residues; it reads VVRGPSHRRGA. Positions 154 to 159 match the Nuclear export signal motif; that stretch reads LDKLRL. Lysine 156 carries the N6-lactoyllysine modification. Residues 158–201 form a DNA-binding region; that stretch reads RLKRKDISEAAETVNKVVERLLRRMQKRESEFKGVEQLNTGSYY. At glutamate 176 the chain carries PolyADP-ribosyl glutamic acid. Threonine 197 contacts GTP. An ATP-binding site is contributed by serine 199. Serine 199 bears the Phosphoserine mark. Tyrosine 201 carries the phosphotyrosine modification. Mg(2+) contacts are provided by glutamate 211 and aspartate 213. Residue aspartate 213 coordinates 2',3'-cGAMP. Lysine 217 is covalently cross-linked (Glycyl lysine isopeptide (Lys-Gly) (interchain with G-Cter in SUMO)). Lysine 271 participates in a covalent cross-link: Glycyl lysine isopeptide (Lys-Gly) (interchain with G-Cter in ubiquitin). Residue glutamate 272 is modified to 5-glutamyl polyglutamate. A Nuclear localization signal motif is present at residues 281 to 291; sequence DVSVEKEKPGS. Glycine 290 is a 2',3'-cGAMP binding site. Serine 291 carries the phosphoserine; by CDK1 and PKB modification. Glutamate 302 carries the post-translational modification 5-glutamyl glutamate. Aspartate 307 is a GTP binding site. Aspartate 307 is a Mg(2+) binding site. Residue aspartate 307 coordinates 2',3'-cGAMP. The tract at residues 329–370 is interaction with collided ribosomes; the sequence is QGWLGTKVRTNLRREPFYLVPKNAKDGNSFQGETWRLSFSHT. A Glycyl lysine isopeptide (Lys-Gly) (interchain with G-Cter in SUMO); alternate cross-link involves residue lysine 335. Lysine 335 participates in a covalent cross-link: Glycyl lysine isopeptide (Lys-Gly) (interchain with G-Cter in ubiquitin); alternate. 2',3'-cGAMP contacts are provided by residues lysine 350 and 364-366; that span reads RLS. 364–371 contacts GTP; the sequence is RLSFSHTE. Glutamate 371 contributes to the ATP binding site. Lysine 372 is covalently cross-linked (Glycyl lysine isopeptide (Lys-Gly) (interchain with G-Cter in SUMO); alternate). Residue lysine 372 forms a Glycyl lysine isopeptide (Lys-Gly) (interchain with G-Cter in ubiquitin); alternate linkage. Lysine 372 is modified (N6-acetyllysine). The tract at residues 372–395 is DNA-binding; it reads KYILNNHGIEKTCCESSGAKCCRK. Residue histidine 378 coordinates Zn(2+). A Glycyl lysine isopeptide (Lys-Gly) (interchain with G-Cter in SUMO) cross-link involves residue lysine 382. N6-acetyllysine is present on lysine 382. Residues cysteine 384, cysteine 385, and cysteine 392 each coordinate Zn(2+). 2 S-palmitoyl cysteine lipidation sites follow: cysteine 392 and cysteine 393. Glycyl lysine isopeptide (Lys-Gly) (interchain with G-Cter in ubiquitin) cross-links involve residues lysine 399, lysine 402, lysine 409, and lysine 410. Lysine 402 lines the ATP pocket. An N6-acetyllysine modification is found at lysine 402. A Phosphoserine modification is found at serine 420. 420–424 is a binding site for ATP; it reads SYHVK. A lipid anchor (S-palmitoyl cysteine) is attached at cysteine 459. Lysine 464 is covalently cross-linked (Glycyl lysine isopeptide (Lys-Gly) (interchain with G-Cter in SUMO); alternate). Lysine 464 is covalently cross-linked (Glycyl lysine isopeptide (Lys-Gly) (interchain with G-Cter in ubiquitin); alternate). Lysine 491 bears the N6-methyllysine mark.

The protein belongs to the mab-21 family. Monomer in the absence of DNA. Homodimer in presence of dsDNA: forms a 2:2 dimer with two enzymes binding to two DNA molecules. Interacts with nucleosomes; interaction is mainly mediated via histones H2A and H2B and inactivates the nucleotidyltransferase activity by blocking DNA-binding and subsequent activation. Interacts with PQBP1 (via WW domain). Interacts with TRIM14; this interaction recruits USP14, leading to deubiquitinate and stabilize CGAS and promote type I interferon production. Interacts with ZCCHC3; promoting sensing of dsDNA by CGAS. Interacts (when not monomethylated) with (poly-ADP-ribosylated) PARP1; interaction takes place in the nucleus and prevents the formation of the PARP1-TIMELESS complex. Interacts (when monomethylated) with SGF29; interaction with SGF29 prevents interaction with PARP1. Interacts with PCBP2; preventing the formation of liquid-like droplets in which CGAS is activated. Interacts with Irgm1; promoting CGAS degradation. Interacts with DDX41. It depends on Mg(2+) as a cofactor. Mn(2+) is required as a cofactor. Requires Zn(2+) as cofactor. Post-translationally, the N-terminal disordered part (1-146) is phosphorylated by AURKB during the G2-M transition, blocking CGAS liquid phase separation and preventing activation. Phosphorylation at Tyr-201 by BLK promotes cytosolic retention. Localizes into the nucleus following dephosphorylation at Tyr-201. Phosphorylation at Ser-420 activates the nucleotidyltransferase activity. Dephosphorylation at Ser-420 by PPP6C impairs its ability to bind GTP, thereby inactivating it. Phosphorylation at Thr-52 and Ser-199 by PRKDC inhibits its cyclic GMP-AMP synthase activity by impairing homodimerization and activation. Phosphorylation at Ser-291 by AKT (AKT1, AKT2 or AKT3) suppresses the nucleotidyltransferase activity. Phosphorylation at Ser-291 by CDK1 during mitosis leads to its inhibition, thereby preventing CGAS activation by self-DNA during mitosis. Dephosphorylated at Ser-291 by protein phosphatase PP1 upon mitotic exit. Ubiquitinated at Lys-402 via 'Lys-48'-linked polyubiquitin chains, leading to its SQSTM1-mediated autophagic degradation. Interaction with TRIM14 promotes recruitment of USP14, leading to deubiquitinate Lys-402 and stabilize CGAS. Ubiquitinated at Lys-372 by RNF185 via 'Lys-27'-linked polyubiquitination, promoting CGAS cyclic GMP-AMP synthase activity. Monoubiquitination at Lys-335 by TRIM56 promotes oligomerization and subsequent activation. Monoubiquitination by TRIM41 promotes CGAS activation. Ubiquitination at Lys-271 and Lys-464 via 'Lys-48'-linked polyubiquitination promotes its degradation. Deubiquitination at Lys-271 by USP29 promotes its stabilization. Deubiquitinated by USP27X, promoting its stabilization. Ubiquitinated at Lys-399 via 'Lys-63'-linked polyubiquitin chains by MARCHF8, leading to the inhibition of its DNA binding ability. In cycling cells, nucleosome-bound CGAS is ubiquitinated at Lys-409 and Lys-410 via 'Lys-48'-linked polyubiquitin chains by the ECS(SPSB3) complex, leading to its degradation: ubiquitination and degradation of nuclear CGAS during G1 and G2 phases is required to promote low intranuclear CGAS abundance before the next mitotic cycle. In terms of processing, sumoylated at Lys-217 and Lys-464 by TRIM38 in uninfected cells and during the early phase of viral infection, promoting its stability by preventing ubiquitination at Lys-271 and Lys-464, and subsequent degradation. Desumoylated by SENP2 during the late phase of viral infection. Sumoylation at Lys-335, Lys-372 and Lys-382 prevents DNA-binding, oligomerization and nucleotidyltransferase activity. Desumoylation at Lys-335, Lys-372 and Lys-382 by SENP7 relieves inhibition and activates CGAS. Post-translationally, polyglutamylated by TTLL6 at Glu-272, leading to impair DNA-binding activity. Monoglutamylated at Glu-302 by TTLL4, leading to impair the nucleotidyltransferase activity. Deglutamylated by AGBL5/CCP5 and AGBL6/CCP6. Acetylation at Lys-372, Lys-382 and Lys-402 inhibits the cyclic GMP-AMP synthase activity. Deacetylated upon cytosolic DNA challenge such as viral infections. Acetylation by KAT5 increases the cyclic GMP-AMP synthase activity by promoting DNA-binding and subsequent activation. In terms of processing, proteolytically cleaved by apoptotic caspases during apoptosis, leading to its inactivation. The damage of the nucleus and the mitochondria during apoptosis leads to leakage of nuclear and mitochondrial DNA, which activate CGAS: cleavage and inactivation during apoptosis in required to prevent cytokine overproduction. Cleaved by CASP7 and CASP3 during virus-induced apoptosis, thereby inactivating it and preventing cytokine overproduction. Cleaved by CASP1 upon DNA virus infection; the cleavage impairs cGAMP production. Also cleaved by the pyroptotic CASP4 during non-canonical inflammasome activation; does not cut at the same sites than CASP1. Post-translationally, degraded via selective autophagy following interaction with Irgm1. Irgm1 promotes CGAS recruitment to autophagosome membranes, promoting its SQSTM1/p62-dependent autophagic degradation. Poly-ADP-ribosylation at Glu-176 by PARP1 impairs DNA-binding, thereby preventing the cyclic GMP-AMP synthase activity. In terms of processing, palmitoylation at Cys-459 by ZDHHC18 impairs DNA-binding, thereby preventing the cyclic GMP-AMP synthase activity. Palmitoylation at Cys-392 and Cys-393 by ZDHHC9 promotes homodimerization and cyclic GMP-AMP synthase activity. Depalmitoylation at Cys-392 and Cys-393 by LYPLAL1 impairs homodimerization and cyclic GMP-AMP synthase activity. Post-translationally, monomethylated at Lys-491 by SETD7. Monomethylation promotes interaction with SGF29, preventing interaction between PARP1 nad SGF29. Demethylation by RIOX1 promotes interaction with PARP1, followed by PARP1 inactivation. Lactylation by AARS2 prevents ability to undergo liquid-liquid phase separation (LLPS), thereby inhibiting CGAS activation.

The protein localises to the nucleus. It is found in the chromosome. It localises to the cell membrane. Its subcellular location is the cytoplasm. The protein resides in the cytosol. The enzyme catalyses GTP + ATP = 2',3'-cGAMP + 2 diphosphate. It carries out the reaction GTP + ATP = pppGp(2'-5')A + diphosphate. It catalyses the reaction pppGp(2'-5')A = 2',3'-cGAMP + diphosphate. With respect to regulation, the enzyme activity is strongly increased by double-stranded DNA (dsDNA), but not by single-stranded DNA or RNA. DNA-binding induces the formation of liquid-like droplets in which CGAS is activated. Liquid-like droplets also create a selective environment that restricts entry of negative regulators, such as TREX1 or BANF1/BAF, allowing sensing of DNA. A number of mechanisms exist to restrict its activity toward self-DNA. The nucleotidyltransferase activity is inhibited in the nucleus via its association with nucleosomes: interacts with the acidic patch of histones H2A and H2B, thereby blocking DNA-binding and subsequent activation. CGAS is also inactive when associated with mitotic chromatin. Chromatin-bound CGAS cannot be activated by exogenous DNA in mitotic cells: phosphorylation of the N-terminal disordered part by AURKB during the G2-M transition blocks CGAS liquid phase separation and activation. Activity toward self-DNA is inhibited by BANF1/BAF upon acute loss of nuclear membrane integrity: BANF1/BAF acts by outcompeting CGAS for DNA-binding, thereby preventing CGAS activation. DNA-induced activation at micronuclei is also limited by TREX1, which degrades micronuclear DNA upon nuclear envelope rupture, thereby preventing CGAS activation. CGAS can be released from nucleosomes and activated by MRE11 component of the MRN complex, which displaces CGAS from acidic-patch-mediated sequestration. Acetylation at Lys-372, Lys-382 and Lys-402 inhibits the cyclic GMP-AMP synthase activity. Acetylation by KAT5 increases the cyclic GMP-AMP synthase activity by promoting DNA-binding and subsequent activation. Phosphorylation at Ser-291 suppresses the nucleotidyltransferase activity. Phosphorylation at Ser-420 promotes the cyclic GMP-AMP synthase activity. Phosphorylation at Thr-52 and Ser-199 inhibits its cyclic GMP-AMP synthase activity. Ubiquitination at Lys-372 via 'Lys-27'-linked polyubiquitination enhances the cyclic GMP-AMP synthase activity. Monoubiquitination at Lys-335 promotes oligomerization and subsequent activation. Sumoylation at Lys-335, Lys-372 and Lys-382 prevents DNA-binding, oligomerization and nucleotidyltransferase activity. The enzyme activity is impaired by the cleavage by CASP1. In addition to DNA, also activated by collided ribosomes upon translation stress: specifically binds collided ribosomes, promoting its activation and triggering type-I interferon production. In hematopoietic stem cells, binding to circular RNA cia-cGAS inhibits the cyclic GMP-AMP synthase activity. Strongly inhibited by compound RU.521, which is specific for mouse protein. Functionally, nucleotidyltransferase that catalyzes the formation of cyclic GMP-AMP (2',3'-cGAMP) from ATP and GTP and plays a key role in innate immunity. Catalysis involves both the formation of a 2',5' phosphodiester linkage at the GpA step and the formation of a 3',5' phosphodiester linkage at the ApG step, producing c[G(2',5')pA(3',5')p]. Acts as a key DNA sensor: directly binds double-stranded DNA (dsDNA), inducing the formation of liquid-like droplets in which CGAS is activated, leading to synthesis of 2',3'-cGAMP, a second messenger that binds to and activates STING1, thereby triggering type-I interferon production. Preferentially binds long dsDNA (around 45 bp) and forms ladder-like networks that function cooperatively to stabilize individual cGAS-dsDNA complexes. Acts as a key foreign DNA sensor, the presence of double-stranded DNA (dsDNA) in the cytoplasm being a danger signal that triggers the immune responses. Has antiviral activity by sensing the presence of dsDNA from DNA viruses in the cytoplasm. Also acts as an innate immune sensor of infection by retroviruses by detecting the presence of reverse-transcribed DNA in the cytosol. Detection of retroviral reverse-transcribed DNA in the cytosol may be indirect and be mediated via interaction with PQBP1, which directly binds reverse-transcribed retroviral DNA. Also detects the presence of DNA from bacteria. 2',3'-cGAMP can be transferred from producing cells to neighboring cells through gap junctions, leading to promote STING1 activation and convey immune response to connecting cells. 2',3'-cGAMP can also be transferred between cells by virtue of packaging within viral particles contributing to IFN-induction in newly infected cells in a cGAS-independent but STING1-dependent manner. Also senses the presence of neutrophil extracellular traps (NETs) that are translocated to the cytosol following phagocytosis, leading to synthesis of 2',3'-cGAMP. In addition to foreign DNA, can also be activated by endogenous nuclear or mitochondrial DNA. When self-DNA leaks into the cytosol during cellular stress (such as mitochondrial stress, DNA damage, mitotic arrest or senescence), or is present in form of cytosolic micronuclei, CGAS is activated leading to a state of sterile inflammation. Acts as a regulator of cellular senescence by binding to cytosolic chromatin fragments that are present in senescent cells, leading to trigger type-I interferon production via STING1 and promote cellular senescence. Also involved in the inflammatory response to genome instability and double-stranded DNA breaks: acts by localizing to micronuclei arising from genome instability. Micronuclei, which as frequently found in cancer cells, consist of chromatin surrounded by its own nuclear membrane: following breakdown of the micronuclear envelope, a process associated with chromothripsis, CGAS binds self-DNA exposed to the cytosol, leading to 2',3'-cGAMP synthesis and subsequent activation of STING1 and type-I interferon production. In a healthy cell, CGAS is however kept inactive even in cellular events that directly expose it to self-DNA, such as mitosis, when cGAS associates with chromatin directly after nuclear envelope breakdown or remains in the form of postmitotic persistent nuclear cGAS pools bound to chromatin. Nuclear CGAS is inactivated by chromatin via direct interaction with nucleosomes, which block CGAS from DNA binding and thus prevent CGAS-induced autoimmunity. Also acts as a suppressor of DNA repair in response to DNA damage: inhibits homologous recombination repair by interacting with PARP1, the CGAS-PARP1 interaction leading to impede the formation of the PARP1-TIMELESS complex. In addition to DNA, also sense translation stress: in response to translation stress, translocates to the cytosol and associates with collided ribosomes, promoting its activation and triggering type-I interferon production. The chain is Cyclic GMP-AMP synthase from Mus musculus (Mouse).